Consider the following 175-residue polypeptide: Protein OPG036 (175 aa).

The protein belongs to the poxviridae OPG036 family.

It localises to the host nucleus. Its function is as follows. Plays a role in the inhibition of host innate immune response. Within the host nucleus, inhibits activation of interferon-beta promoter by inhibiting IRF3 activation. This is Protein OPG036 (OPG036) from Bos taurus (Bovine).